The primary structure comprises 577 residues: MFS-type transporter pgmG (577 aa).

Residues 1-32 (MSETVTQTETDQRPATARSLGAEEKEAKSDEQ) are disordered. Residues 21–31 (GAEEKEAKSDE) are compositionally biased toward basic and acidic residues. The next 8 membrane-spanning stretches (helical) occupy residues 45–65 (FIVI…NTIV), 84–104 (WLSV…SKIY), 111–131 (WLYL…GAAP), 141–161 (ALAG…LSVN), 174–194 (TGLT…GFAV), 218–238 (PLTV…LFML), 259–279 (LGTI…NFGG), and 292–312 (CFVV…YCIG). Asn317 carries N-linked (GlcNAc...) asparagine glycosylation. The helical transmembrane segment at 330-350 (FIILFVQTASVATVFFVPIYF) threads the bilayer. Asn360 carries N-linked (GlcNAc...) asparagine glycosylation. The next 5 helical transmembrane spans lie at 363–383 (AIDA…AMIL), 395–415 (MPWY…MYTI), 426–446 (GYMI…FAVA), 457–477 (VATG…LAIA), and 532–552 (ISQV…LAIF).

The protein belongs to the major facilitator superfamily. TCR/Tet family.

It localises to the membrane. Functionally, MFS-type transporter; part of the gene cluster that mediates the biosynthesis of pleosporalin A, ascomycone A, as well as a third cryptic naphthoquinone derived pigment, all responsible for the coloration of conidia. Seems not to be involved in pigment biosynthesis although its expression is regulated by the cluster-specific transcription factor pgmR. In Aspergillus terreus (strain NIH 2624 / FGSC A1156), this protein is MFS-type transporter pgmG.